The following is a 447-amino-acid chain: Na(+)-translocating NADH-quinone reductase subunit A (447 aa).

It belongs to the NqrA family. As to quaternary structure, composed of six subunits; NqrA, NqrB, NqrC, NqrD, NqrE and NqrF.

It catalyses the reaction a ubiquinone + n Na(+)(in) + NADH + H(+) = a ubiquinol + n Na(+)(out) + NAD(+). Functionally, NQR complex catalyzes the reduction of ubiquinone-1 to ubiquinol by two successive reactions, coupled with the transport of Na(+) ions from the cytoplasm to the periplasm. NqrA to NqrE are probably involved in the second step, the conversion of ubisemiquinone to ubiquinol. This Photorhabdus laumondii subsp. laumondii (strain DSM 15139 / CIP 105565 / TT01) (Photorhabdus luminescens subsp. laumondii) protein is Na(+)-translocating NADH-quinone reductase subunit A.